A 748-amino-acid chain; its full sequence is Peptidyl serine alpha-galactosyltransferase (748 aa).

The signal sequence occupies residues 1 to 26 (MVAVFHGPLVLGALLLLLALQHGASA). The Extracellular segment spans residues 27-710 (EEPGFANRTG…GPSLHSLLGR (684 aa)). Asn33, Asn184, and Asn297 each carry an N-linked (GlcNAc...) asparagine glycan. In terms of domain architecture, ShKT spans 415–449 (CQDFHPKCEEWKESGECTKNENYMTENCRKTCDKC). Disulfide bonds link Cys415/Cys449, Cys422/Cys442, and Cys431/Cys446. Disordered regions lie at residues 474 to 576 (ELQP…ADPK) and 611 to 670 (EVPK…KKNI). Residues 531–565 (SPPPSPPPASPPPVDSPPPMSPPPESPSPDKPPPK) are compositionally biased toward pro residues. Residues 611–637 (EVPKRTKATDEEEEAPKAKHAESHLTL) show a composition bias toward basic and acidic residues. The helical transmembrane segment at 711 to 731 (LNTWQALVLWLVVVVAFLALV) threads the bilayer. Residues 732-748 (PRIAKLRRRQRSGMRTE) are Cytoplasmic-facing.

The cofactor is Mn(2+).

The protein localises to the membrane. Functionally, glycosyltransferase involved in the O-galactosylation of several proteins including extensins. Catalyzes the transfer of alpha-galactosyl to Ser residues. Hydroxylation of proline residues adjacent to the serine acceptor is required for activity. Utilizes selectively UDP-galactose as a donor nucleotide sugar. This Chlamydomonas reinhardtii (Chlamydomonas smithii) protein is Peptidyl serine alpha-galactosyltransferase.